Reading from the N-terminus, the 48-residue chain is Palustrin-3b (48 aa).

A disulfide bond links Cys43 and Cys48.

Expressed by the skin glands.

The protein resides in the secreted. In terms of biological role, antimicrobial activity against Gram-negative bacterium E.coli. The polypeptide is Palustrin-3b (Lithobates palustris (Pickerel frog)).